We begin with the raw amino-acid sequence, 341 residues long: Formimidoylglutamase (341 aa).

Mn(2+)-binding residues include H133, D162, H164, D166, C253, and D255.

Belongs to the arginase family. Mn(2+) is required as a cofactor.

The catalysed reaction is N-formimidoyl-L-glutamate + H2O = formamide + L-glutamate. It participates in amino-acid degradation; L-histidine degradation into L-glutamate; L-glutamate from N-formimidoyl-L-glutamate (hydrolase route): step 1/1. In terms of biological role, catalyzes the conversion of N-formimidoyl-L-glutamate to L-glutamate and formamide. The sequence is that of Formimidoylglutamase from Aromatoleum aromaticum (strain DSM 19018 / LMG 30748 / EbN1) (Azoarcus sp. (strain EbN1)).